The primary structure comprises 526 residues: MSKKATYPKVMCTQHPDSASKYISTQEEPGEAIEAAVVFGCDEYMPDYEGKATPYHQNVQIVSRFIEETDLIPGKDIFITPRAPSAAQENRFRQLMVMMSIAEANHGALEYSDVQAINEFVHPMTGTVGEILDAQQHMVDVGELAKKEFGVAMEVPRIIPLIEDAPALLHAKELAENTLLSWEKRFGAAPEKFRVFLGKSDSALSFGHVASTLSCKYAISGISELDLELDTSTGIIFGAGTLPFRGHLSLKNAENFFREYRGIGTITLQSAVRYSHDKGEAEALVRLAEERLPESPEIYSGEEKEEIVNLIGIFGARYNRIIREMSCTINQLAGLLPQQRDRLMHKGTGGYSRNVPDISGLVCLCRKDVGKELSASMPAEDLNLPRAIKFTGALYSIGLPPEFIGTGTALEEAREKLGEEACERLLKKYFPSLASDLSFASGYLDLNVASRFLPEACLKEIRKDIEVLRDTFSLKVQPEPSYRILLEMMQPDLLQAGTKGNCMDEEVSQLVCSTLTKMGKIRKALG.

The protein belongs to the PEPCase type 2 family. In terms of assembly, homotetramer. Mg(2+) is required as a cofactor.

The catalysed reaction is oxaloacetate + phosphate = phosphoenolpyruvate + hydrogencarbonate. In terms of biological role, catalyzes the irreversible beta-carboxylation of phosphoenolpyruvate (PEP) to form oxaloacetate (OAA), a four-carbon dicarboxylic acid source for the tricarboxylic acid cycle. The sequence is that of Phosphoenolpyruvate carboxylase from Methanosarcina mazei (strain ATCC BAA-159 / DSM 3647 / Goe1 / Go1 / JCM 11833 / OCM 88) (Methanosarcina frisia).